Reading from the N-terminus, the 193-residue chain is Activity-regulated cytoskeleton associated protein 2 (193 aa).

It belongs to the ARC/ARG3.1 family. In terms of assembly, homooligomer; homooligomerizes into virion-like capsids.

Its subcellular location is the extracellular vesicle membrane. Its function is as follows. Self-assembles into virion-like capsids that encapsulate RNAs and mediate intercellular RNA transfer. Arc2 protein is released from cells in extracellular vesicles that mediate the transfer of mRNA into neighboring cells. This is Activity-regulated cytoskeleton associated protein 2 from Drosophila melanogaster (Fruit fly).